The following is a 632-amino-acid chain: Chaperone protein HtpG (632 aa).

The interval 1–345 (MTTAAHAETL…SKDLSLNVSR (345 aa)) is a; substrate-binding. The interval 346–561 (ELLQKDPQVD…EHDMGYQMRR (216 aa)) is b. The tract at residues 562 to 632 (LMEAAGQPLP…VQRLNKLLSH (71 aa)) is c.

Belongs to the heat shock protein 90 family. As to quaternary structure, homodimer.

It localises to the cytoplasm. Its function is as follows. Molecular chaperone. Has ATPase activity. This chain is Chaperone protein HtpG, found in Chromohalobacter salexigens (strain ATCC BAA-138 / DSM 3043 / CIP 106854 / NCIMB 13768 / 1H11).